The following is a 344-amino-acid chain: Pyruvate dehydrogenase E1 component subunit alpha (344 aa).

His55, Tyr81, Arg82, Ala130, Ile132, Asp168, Gly169, and Asn197 together coordinate pyruvate. Thiamine diphosphate-binding residues include Tyr81, Arg82, Ala130, Ile132, Asp168, Gly169, Asn197, and His266. Asp168 is a Mg(2+) binding site. Residue Asn197 coordinates Mg(2+).

In terms of assembly, heterodimer of an alpha and a beta chain. Thiamine diphosphate is required as a cofactor. It depends on Mg(2+) as a cofactor.

The protein resides in the plastid. The protein localises to the chloroplast. The enzyme catalyses N(6)-[(R)-lipoyl]-L-lysyl-[protein] + pyruvate + H(+) = N(6)-[(R)-S(8)-acetyldihydrolipoyl]-L-lysyl-[protein] + CO2. In terms of biological role, the pyruvate dehydrogenase complex catalyzes the overall conversion of pyruvate to acetyl-CoA and CO(2). It contains multiple copies of three enzymatic components: pyruvate dehydrogenase (E1), dihydrolipoamide acetyltransferase (E2) and lipoamide dehydrogenase (E3). The polypeptide is Pyruvate dehydrogenase E1 component subunit alpha (pdhA) (Porphyra purpurea (Red seaweed)).